A 300-amino-acid polypeptide reads, in one-letter code: Probable L-serine dehydratase, alpha chain (300 aa).

Belongs to the iron-sulfur dependent L-serine dehydratase family. As to quaternary structure, heterodimer of an alpha chain and a beta chain. [4Fe-4S] cluster is required as a cofactor.

The enzyme catalyses L-serine = pyruvate + NH4(+). It functions in the pathway carbohydrate biosynthesis; gluconeogenesis. In Bacillus subtilis (strain 168), this protein is Probable L-serine dehydratase, alpha chain (sdaAA).